The chain runs to 171 residues: Myelin basic protein (171 aa).

An N-acetylalanine modification is found at A1. Positions 1–12 (ASQKRPSQRHGS) are enriched in basic residues. Residues 1 to 171 (ASQKRPSQRH…SRSGSPMARR (171 aa)) form a disordered region. Residues S7 and S12 each carry the phosphoserine modification. Position 14 is a phosphotyrosine (Y14). S19 bears the Phosphoserine mark. T20 bears the Phosphothreonine mark. A citrulline mark is found at R25 and R31. T35 is modified (phosphothreonine). S39 bears the Phosphoserine mark. Residues R42 and R48 each carry the omega-N-methylarginine modification. S55 bears the Phosphoserine mark. T66 is subject to Phosphothreonine. A Phosphotyrosine modification is found at Y68. T95 and T98 each carry phosphothreonine. Q103 carries the post-translational modification Deamidated glutamine. Residue R107 is modified to Omega-N-methylarginine; alternate. Residue R107 is modified to Symmetric dimethylarginine; alternate. Phosphoserine is present on S115. K122 carries the N6-acetyllysine modification. R130 carries the citrulline modification. Q148 bears the Deamidated glutamine mark. Position 160 is a citrulline (R160). Residue S162 is modified to Phosphoserine. A Phosphoserine; by UHMK1 modification is found at S166. At R171 the chain carries Citrulline.

It belongs to the myelin basic protein family. As to quaternary structure, homodimer. In terms of processing, as in other animals, several charge isomers may be produced as a result of optional post-translational modifications, such as phosphorylation of serine or threonine residues, deamidation of glutamine or asparagine residues, citrullination and methylation of arginine residues. Phosphorylated by TAOK2, VRK2, MAPK11, MAPK12, MAPK14 and MINK1. Post-translationally, proteolytically cleaved in B cell lysosomes by cathepsin CTSG which degrades the major immunogenic MBP epitope and prevents the activation of MBP-specific autoreactive T cells.

Its subcellular location is the myelin membrane. Its function is as follows. Is, with PLP, the most abundant protein component of the myelin membrane in the CNS. Has a role in both the formation and stabilization of this compact multilayer arrangement of bilayers. Each splice variant and charge isomer may have a specialized function in the assembly of an optimized, biochemically functional myelin membrane. The sequence is that of Myelin basic protein (MBP) from Sus scrofa (Pig).